A 527-amino-acid chain; its full sequence is Bifunctional purine biosynthesis protein PurH (527 aa).

In terms of domain architecture, MGS-like spans 1-149 (MASDFLPVRR…KNFARVAVAT (149 aa)).

Belongs to the PurH family.

It catalyses the reaction (6R)-10-formyltetrahydrofolate + 5-amino-1-(5-phospho-beta-D-ribosyl)imidazole-4-carboxamide = 5-formamido-1-(5-phospho-D-ribosyl)imidazole-4-carboxamide + (6S)-5,6,7,8-tetrahydrofolate. It carries out the reaction IMP + H2O = 5-formamido-1-(5-phospho-D-ribosyl)imidazole-4-carboxamide. Its pathway is purine metabolism; IMP biosynthesis via de novo pathway; 5-formamido-1-(5-phospho-D-ribosyl)imidazole-4-carboxamide from 5-amino-1-(5-phospho-D-ribosyl)imidazole-4-carboxamide (10-formyl THF route): step 1/1. It functions in the pathway purine metabolism; IMP biosynthesis via de novo pathway; IMP from 5-formamido-1-(5-phospho-D-ribosyl)imidazole-4-carboxamide: step 1/1. This Xanthomonas oryzae pv. oryzae (strain MAFF 311018) protein is Bifunctional purine biosynthesis protein PurH.